The chain runs to 483 residues: ATP-dependent RNA helicase DDX25 (483 aa).

Threonine 49 carries the phosphothreonine modification. A Nuclear export signal motif is present at residues 61-74; sequence LAANSLLNKLIRQS. The Q motif motif lies at 97-125; it reads KTFEELRLKEELLKGIYAMGFNRPSKIQE. Positions 100–114 match the Nuclear localization signal motif; the sequence is EELRLKEELLKGIYA. In terms of domain architecture, Helicase ATP-binding spans 130-300; sequence MMLAHPPQNL…ERIIPDPNVI (171 aa). 143–150 is an ATP binding site; it reads SQSGTGKT. The short motif at 247 to 250 is the DEAD box element; that stretch reads DEAD. A Helicase C-terminal domain is found at 311–478; sequence NIRQYYVLCE…QLDPEDMDEI (168 aa).

It belongs to the DEAD box helicase family. In terms of processing, phosphorylated on threonine residues. The phosphorylated form is found in the cytoplasm but not in the nucleus. In terms of tissue distribution, isoform 1 is expressed in germ cells. Isoform 2 is highly expressed in Leydig cells and weakly expressed in the pituitary and hypothalamus. Isoform 3 is weakly expressed only in germ cells.

The protein resides in the cytoplasm. It is found in the nucleus. It catalyses the reaction ATP + H2O = ADP + phosphate + H(+). Its function is as follows. ATP-dependent RNA helicase. Required for mRNA export and translation regulation during spermatid development. The sequence is that of ATP-dependent RNA helicase DDX25 (Ddx25) from Rattus norvegicus (Rat).